A 188-amino-acid chain; its full sequence is Putative manganese efflux pump MntP (188 aa).

The next 6 membrane-spanning stretches (helical) occupy residues 3–23 (FYAL…VALA), 35–55 (IAAT…AGWV), 63–83 (FISE…GLKM), 104–126 (WMTV…GLAF), 140–160 (MATT…GVLF), and 167–187 (AGGL…LGLI).

It belongs to the MntP (TC 9.B.29) family.

It localises to the cell inner membrane. Functionally, probably functions as a manganese efflux pump. This is Putative manganese efflux pump MntP from Neisseria meningitidis serogroup B (strain ATCC BAA-335 / MC58).